We begin with the raw amino-acid sequence, 968 residues long: RNA polymerase-associated protein RapA (968 aa).

Residues 164 to 334 form the Helicase ATP-binding domain; the sequence is EVGQRHAPRV…FARLRLLDPD (171 aa). 177–184 provides a ligand contact to ATP; sequence DEVGLGKT. Residues 280–283 carry the DEAH box motif; it reads DEAH. A Helicase C-terminal domain is found at 490-644; sequence RVEWLLNYLV…TCPTGRTIYD (155 aa).

This sequence belongs to the SNF2/RAD54 helicase family. RapA subfamily. As to quaternary structure, interacts with the RNAP. Has a higher affinity for the core RNAP than for the holoenzyme. Its ATPase activity is stimulated by binding to RNAP.

In terms of biological role, transcription regulator that activates transcription by stimulating RNA polymerase (RNAP) recycling in case of stress conditions such as supercoiled DNA or high salt concentrations. Probably acts by releasing the RNAP, when it is trapped or immobilized on tightly supercoiled DNA. Does not activate transcription on linear DNA. Probably not involved in DNA repair. This is RNA polymerase-associated protein RapA from Yersinia pestis bv. Antiqua (strain Antiqua).